The sequence spans 51 residues: ATP synthase subunit epsilon-like protein, mitochondrial (51 aa).

Lys-21 carries the post-translational modification N6-acetyllysine.

This sequence belongs to the eukaryotic ATPase epsilon family. F-type ATPases have 2 components, CF(1) - the catalytic core - and CF(0) - the membrane proton channel. CF(1) has five subunits: alpha(3), beta(3), gamma(1), delta(1), epsilon(1). CF(0) seems to have nine subunits: a, b, c, d, e, f, g, F6 and 8 (or A6L).

Its subcellular location is the mitochondrion inner membrane. Its function is as follows. Mitochondrial membrane ATP synthase (F(1)F(0) ATP synthase or Complex V) produces ATP from ADP in the presence of a proton gradient across the membrane which is generated by electron transport complexes of the respiratory chain. F-type ATPases consist of two structural domains, F(1) - containing the extramembraneous catalytic core, and F(0) - containing the membrane proton channel, linked together by a central stalk and a peripheral stalk. During catalysis, ATP synthesis in the catalytic domain of F(1) is coupled via a rotary mechanism of the central stalk subunits to proton translocation. Part of the complex F(1) domain and of the central stalk which is part of the complex rotary element. Rotation of the central stalk against the surrounding alpha(3)beta(3) subunits leads to hydrolysis of ATP in three separate catalytic sites on the beta subunits. The polypeptide is ATP synthase subunit epsilon-like protein, mitochondrial (Homo sapiens (Human)).